The primary structure comprises 204 residues: DNA-binding transcriptional activator EvgA (204 aa).

One can recognise a Response regulatory domain in the interval 2-117 (NAIIIDDHPL…NIIAAIEAAK (116 aa)). At Asp52 the chain carries 4-aspartylphosphate. Residues 137 to 202 (DQQKLDSLSK…DLYTFAQRNK (66 aa)) form the HTH luxR-type domain. Positions 161 to 180 (NNDIAEKMFISNKTVSTYKS) form a DNA-binding region, H-T-H motif.

Homodimer. Post-translationally, phosphorylated by EvgS.

It is found in the cytoplasm. Functionally, member of the two-component regulatory system EvgS/EvgA. Regulates the expression of emrKY operon and yfdX. Also seems to control expression of at least one other multidrug efflux operon. The chain is DNA-binding transcriptional activator EvgA (evgA) from Escherichia coli O157:H7.